Reading from the N-terminus, the 860-residue chain is MQEQYRPEEIESNVQQHWDEKQTFKVTEDEGKEKYYCLSMLPYPSGRLHMGHVRNYTIGDVISRYQRMLGKNVLQPIGWDAFGLPAEGAAVKNNTAPAPWTYANIDYMKNQLKLLGFGYDWNRELATCQPEYYRWEQWFFTKLYEKGLVYKKTSAVNWCPHDMTVLANEQVIDGCCWRCDSKVERKEIPQWFVKITDYADELLNDLDKLESWPEQVKTMQRNWIGRSEGVEIEFTVLNSEEKLSVYTTRPDTFMGVTYLAVAAGHPLAAQAALNNPALADFIAECRNTKVAEADMATMEKKGMATGLFAAHPLTGEKVPVWVANFVLMEYGTGAVMAVPGHDQRDWEFASKYSLPIKPVILAADGSEPDLSGSAMTEKGTLFNSGEFDGLSHEAGFDAIAAKLADKGVGERKVNYRLRDWGVSRQRYWGAPIPMVTLEDGTVMPTPEDQLPVILPEDVVMDGITSPIKADAEWAKTTVNGQPALRETDTFDTFMESSWYYARYTCPNYDKGMLDPAAANYWLPVDQYVGGIEHAIMHLLYFRFFHKLLRDTGLVNSDEPAKRLLCQGMVLADAFYFTGSNGERNWVSPTDVSVERDEKGRITKATDNDGNELIYAGMSKMSKSKNNGIDPQVMVERYGADTVRLFMMFASPAEMTLEWQESGVEGANRFLKRVWRLAFEHTEKGPTVALDLDALNDEQKALRRDLHKTISKVSDDIGRRQTFNTAIAAIMELMNKLARAPQETEQDRALMQEALLAVVRMLNPFTPHASFVLWQALGGAGEIDNAPWPQAEEAAMVEDSLLVVVQVNGKVRGKITVAADATQEQVQARAAQEHLVAKYLDGVTIRKVIFVPGKLLNLVVG.

Positions 42–52 (PYPSGRLHMGH) match the 'HIGH' region motif. The 'KMSKS' region motif lies at 619–623 (KMSKS). Residue Lys-622 participates in ATP binding.

It belongs to the class-I aminoacyl-tRNA synthetase family.

The protein localises to the cytoplasm. The catalysed reaction is tRNA(Leu) + L-leucine + ATP = L-leucyl-tRNA(Leu) + AMP + diphosphate. The polypeptide is Leucine--tRNA ligase (Erwinia tasmaniensis (strain DSM 17950 / CFBP 7177 / CIP 109463 / NCPPB 4357 / Et1/99)).